Consider the following 504-residue polypeptide: Anaerobic nitric oxide reductase transcription regulator NorR (504 aa).

A 4-aspartylphosphate modification is found at Asp57. Positions 187–416 constitute a Sigma-54 factor interaction domain; it reads MIGLSPGMTQ…LEHAIHRAVV (230 aa). ATP-binding positions include 215 to 222 and 278 to 287; these read GETGTGKE and ADNGTLFLDE. A DNA-binding region (H-T-H motif) is located at residues 479-498; it reads WAACARMLETDVANLHRLAK.

The protein operates within nitrogen metabolism; nitric oxide reduction. Required for the expression of anaerobic nitric oxide (NO) reductase, acts as a transcriptional activator for at least the norVW operon. Activation also requires sigma-54. This chain is Anaerobic nitric oxide reductase transcription regulator NorR, found in Escherichia coli O8 (strain IAI1).